The primary structure comprises 170 residues: Putative phosphoesterase OB1230 (170 aa).

The active-site Proton donor is His34. Short sequence motifs (HXTX) lie at residues 34-37 (HLTL) and 115-118 (HITI). The Proton acceptor role is filled by His115.

It belongs to the 2H phosphoesterase superfamily. YjcG family.

This is Putative phosphoesterase OB1230 from Oceanobacillus iheyensis (strain DSM 14371 / CIP 107618 / JCM 11309 / KCTC 3954 / HTE831).